The chain runs to 65 residues: Large ribosomal subunit protein bL31 (65 aa).

Zn(2+) contacts are provided by C16, C18, C36, and C39.

The protein belongs to the bacterial ribosomal protein bL31 family. Type A subfamily. Part of the 50S ribosomal subunit. It depends on Zn(2+) as a cofactor.

Its function is as follows. Binds the 23S rRNA. The protein is Large ribosomal subunit protein bL31 of Geotalea uraniireducens (strain Rf4) (Geobacter uraniireducens).